A 126-amino-acid polypeptide reads, in one-letter code: Large ribosomal subunit protein bL12 (126 aa).

This sequence belongs to the bacterial ribosomal protein bL12 family. In terms of assembly, homodimer. Part of the ribosomal stalk of the 50S ribosomal subunit. Forms a multimeric L10(L12)X complex, where L10 forms an elongated spine to which 2 to 4 L12 dimers bind in a sequential fashion. Binds GTP-bound translation factors.

Its function is as follows. Forms part of the ribosomal stalk which helps the ribosome interact with GTP-bound translation factors. Is thus essential for accurate translation. The protein is Large ribosomal subunit protein bL12 of Nitrosospira multiformis (strain ATCC 25196 / NCIMB 11849 / C 71).